Consider the following 128-residue polypeptide: Ribonuclease pancreatic (128 aa).

Residues 1–25 (KESSAKKFQRQHIDSSGSPSTNPNY) are disordered. Residues Lys-7 and Arg-10 each coordinate substrate. The active-site Proton acceptor is His-12. Residues 14–25 (DSSGSPSTNPNY) show a composition bias toward polar residues. Cystine bridges form between Cys-26–Cys-84, Cys-40–Cys-95, Cys-58–Cys-110, and Cys-65–Cys-72. The N-linked (GlcNAc...) asparagine glycan is linked to Asn-34. Residues 41–45 (KPVNT), Lys-66, and Arg-85 each bind substrate. The active-site Proton donor is the His-119.

This sequence belongs to the pancreatic ribonuclease family. In terms of assembly, monomer. Interacts with and forms tight 1:1 complexes with RNH1. Dimerization of two such complexes may occur. Interaction with RNH1 inhibits this protein. Pancreas.

It localises to the secreted. It carries out the reaction an [RNA] containing cytidine + H2O = an [RNA]-3'-cytidine-3'-phosphate + a 5'-hydroxy-ribonucleotide-3'-[RNA].. The enzyme catalyses an [RNA] containing uridine + H2O = an [RNA]-3'-uridine-3'-phosphate + a 5'-hydroxy-ribonucleotide-3'-[RNA].. Functionally, endonuclease that catalyzes the cleavage of RNA on the 3' side of pyrimidine nucleotides. Acts on single-stranded and double-stranded RNA. The protein is Ribonuclease pancreatic (RNASE1) of Proechimys guairae (Guaira spiny rat).